The sequence spans 252 residues: Hsp70-Hsp90 organising protein (252 aa).

TPR repeat units lie at residues 7–40 (AQRL…DPLD), 41–74 (HVLY…KKDW), and 75–108 (PKGY…DPNN). A coiled-coil region spans residues 197–239 (EGNDAEERQRQQREEEERRKKKEEEERKKKEEEEMKKQNRTPE). The tract at residues 199 to 252 (NDAEERQRQQREEEERRKKKEEEERKKKEEEEMKKQNRTPEQIQGDEHKLKVMN) is disordered. 2 stretches are compositionally biased toward basic and acidic residues: residues 201–233 (AEER…EMKK) and 243–252 (GDEHKLKVMN).

In terms of assembly, monomer. Homodimer. Forms a complex composed of HOP and chaperones HSP70 and HSP90; the interaction is stronger in the absence of ATP. Interacts (via TPR 1, 2, 3, 7, 8 and 9 repeats) with HSP70 (via C-terminus); the interaction is direct and is stronger in the absence of ATP. Interacts (via TPR 4, 5 and 6 repeats) with HSP90 (via C-terminus); the interaction is direct.

Its subcellular location is the cytoplasm. In terms of biological role, acts as a co-chaperone and mediates the association of the chaperones HSP70 and HSP90 probably facilitating substrate transfer from HSP70 to HSP90. Stimulates HSP70 ATPase activity and, in contrast, inhibits HSP90 ATPase activity. The protein is Hsp70-Hsp90 organising protein of Plasmodium falciparum.